The primary structure comprises 256 residues: UPF0246 protein TERTU_4575 (256 aa).

This sequence belongs to the UPF0246 family.

This chain is UPF0246 protein TERTU_4575, found in Teredinibacter turnerae (strain ATCC 39867 / T7901).